We begin with the raw amino-acid sequence, 258 residues long: Aspartate/glutamate leucyltransferase (258 aa).

Belongs to the R-transferase family. Bpt subfamily.

The protein localises to the cytoplasm. The catalysed reaction is N-terminal L-glutamyl-[protein] + L-leucyl-tRNA(Leu) = N-terminal L-leucyl-L-glutamyl-[protein] + tRNA(Leu) + H(+). It carries out the reaction N-terminal L-aspartyl-[protein] + L-leucyl-tRNA(Leu) = N-terminal L-leucyl-L-aspartyl-[protein] + tRNA(Leu) + H(+). In terms of biological role, functions in the N-end rule pathway of protein degradation where it conjugates Leu from its aminoacyl-tRNA to the N-termini of proteins containing an N-terminal aspartate or glutamate. In Rhizobium etli (strain ATCC 51251 / DSM 11541 / JCM 21823 / NBRC 15573 / CFN 42), this protein is Aspartate/glutamate leucyltransferase.